A 204-amino-acid chain; its full sequence is CASP-like protein 4B4 (204 aa).

The Cytoplasmic portion of the chain corresponds to 1–60 (MSAAVAASSGAPAADVEKGAAAADANVDGGGAPAAAAASGEGVVSAVVRRWRRQDLLEKS). Residues 61 to 81 (GSALRVAAWAFSLLAFVVMGA) traverse the membrane as a helical segment. The Extracellular segment spans residues 82 to 98 (NDHGDWRQFEHYEEYRY). Residues 99-119 (VVAIGVLAFIYTTLQLVRHGV) form a helical membrane-spanning segment. Over 120–130 (RLTGGQDLQGK) the chain is Cytoplasmic. A helical transmembrane segment spans residues 131 to 151 (VAVLVDFAGDQVTAYLLMSAV). At 152–175 (SAAIPITNRMREGADNVFTDSSAA) the chain is on the extracellular side. The helical transmembrane segment at 176-196 (SISMAFFAFLCLALSALVSGF) threads the bilayer. The Cytoplasmic segment spans residues 197-204 (KLAKQTYI).

The protein belongs to the Casparian strip membrane proteins (CASP) family. As to quaternary structure, homodimer and heterodimers.

The protein resides in the cell membrane. The polypeptide is CASP-like protein 4B4 (Oryza sativa subsp. japonica (Rice)).